The primary structure comprises 206 residues: MELGWLLVIGSYLLGSVSFSYIIAKKIKKVDIRQHGSGNAGATNTLRVLGVGPAVTVLLLDILKGVIAVVVTVQLTPDGDGWFAAAAGIAAIIGHNWPIYYGFRGGKGVATTIGVLASLVPLAAVLAGVIAIGSIVWTRYVSLGSLLFVTLTALLVAVLSQWFGYPVAYIYLTIIVAILSMWRHRSNIQRLLSGTENKLGRKKETT.

A run of 5 helical transmembrane segments spans residues 3–23 (LGWL…SYII), 51–71 (VGPA…AVVV), 83–103 (FAAA…YYGF), 113–133 (IGVL…IAIG), and 162–182 (WFGY…LSMW).

This sequence belongs to the PlsY family. As to quaternary structure, probably interacts with PlsX.

Its subcellular location is the cell membrane. The enzyme catalyses an acyl phosphate + sn-glycerol 3-phosphate = a 1-acyl-sn-glycero-3-phosphate + phosphate. Its pathway is lipid metabolism; phospholipid metabolism. Functionally, catalyzes the transfer of an acyl group from acyl-phosphate (acyl-PO(4)) to glycerol-3-phosphate (G3P) to form lysophosphatidic acid (LPA). This enzyme utilizes acyl-phosphate as fatty acyl donor, but not acyl-CoA or acyl-ACP. The protein is Glycerol-3-phosphate acyltransferase of Halalkalibacterium halodurans (strain ATCC BAA-125 / DSM 18197 / FERM 7344 / JCM 9153 / C-125) (Bacillus halodurans).